The following is a 164-amino-acid chain: Cytochrome c-type biogenesis protein CcmE (164 aa).

The Cytoplasmic segment spans residues 1–7 (MTRKQRR). The chain crosses the membrane as a helical; Signal-anchor for type II membrane protein span at residues 8-28 (LLMIGGAGVVLVVAVGLVLNA). The Periplasmic segment spans residues 29 to 164 (MRGSIVFFST…ASADAAGPSR (136 aa)). 2 residues coordinate heme: H122 and Y126. Residues 137-149 (KQGHWKDDYEKKP) show a composition bias toward basic and acidic residues. The disordered stretch occupies residues 137 to 164 (KQGHWKDDYEKKPPGAPGASADAAGPSR). Over residues 153-164 (PGASADAAGPSR) the composition is skewed to low complexity.

This sequence belongs to the CcmE/CycJ family.

The protein resides in the cell inner membrane. Heme chaperone required for the biogenesis of c-type cytochromes. Transiently binds heme delivered by CcmC and transfers the heme to apo-cytochromes in a process facilitated by CcmF and CcmH. The chain is Cytochrome c-type biogenesis protein CcmE from Rhodopseudomonas palustris (strain BisB5).